The sequence spans 132 residues: UPF0299 membrane protein KPN78578_25390 (132 aa).

The next 4 helical transmembrane spans lie at 5–25, 38–60, 66–86, and 93–113; these read LTIIWQYLRAFVLIYACLYAG, GSIIGMLILFVLLALQIMPPQWV, ILIRYMALLFVPIGVGVMQYW, and LGPVVISCAISTLVVFVVVSW.

It belongs to the UPF0299 family.

The protein resides in the cell inner membrane. The protein is UPF0299 membrane protein KPN78578_25390 of Klebsiella pneumoniae subsp. pneumoniae (strain ATCC 700721 / MGH 78578).